Reading from the N-terminus, the 32-residue chain is Delta-actitoxin-Eqd1a (32 aa).

The protein belongs to the sea anemone short toxin (type III) family. In terms of processing, contains 4 disulfide bonds.

The protein resides in the secreted. It localises to the nematocyst. In terms of biological role, binds specifically to sodium channels (Nav) of the axonal membrane of crayfish and prolongs the falling phase of the action potential. It also increases the maximum rates of rise of both action potential and resting potential. Is only active on crustaceans. This is Delta-actitoxin-Eqd1a from Entacmaea quadricolor (Bubble-tip anemone).